Consider the following 377-residue polypeptide: uncharacterized protein (377 aa).

Transmembrane regions (helical) follow at residues 26–46, 67–87, 108–128, and 135–155; these read TFQN…VVAI, TVGS…WVII, FLTF…ISLT, and IDYG…ALYI.

It is found in the cell membrane. This is an uncharacterized protein from Methanocaldococcus jannaschii (strain ATCC 43067 / DSM 2661 / JAL-1 / JCM 10045 / NBRC 100440) (Methanococcus jannaschii).